The following is a 313-amino-acid chain: Aspartate carbamoyltransferase catalytic subunit (313 aa).

Carbamoyl phosphate-binding residues include Arg51 and Thr52. Position 80 (Lys80) interacts with L-aspartate. Carbamoyl phosphate is bound by residues Arg101, His129, and Gln132. L-aspartate contacts are provided by Arg162 and Arg224. The carbamoyl phosphate site is built by Leu263 and Pro264.

The protein belongs to the aspartate/ornithine carbamoyltransferase superfamily. ATCase family. Heterododecamer (2C3:3R2) of six catalytic PyrB chains organized as two trimers (C3), and six regulatory PyrI chains organized as three dimers (R2).

The catalysed reaction is carbamoyl phosphate + L-aspartate = N-carbamoyl-L-aspartate + phosphate + H(+). Its pathway is pyrimidine metabolism; UMP biosynthesis via de novo pathway; (S)-dihydroorotate from bicarbonate: step 2/3. Functionally, catalyzes the condensation of carbamoyl phosphate and aspartate to form carbamoyl aspartate and inorganic phosphate, the committed step in the de novo pyrimidine nucleotide biosynthesis pathway. The protein is Aspartate carbamoyltransferase catalytic subunit of Bacteroides thetaiotaomicron (strain ATCC 29148 / DSM 2079 / JCM 5827 / CCUG 10774 / NCTC 10582 / VPI-5482 / E50).